The sequence spans 396 residues: Elongation factor Tu (396 aa).

One can recognise a tr-type G domain in the interval Lys-10–Thr-206. Residues Gly-19–Thr-26 are G1. Gly-19 to Thr-26 provides a ligand contact to GTP. Thr-26 serves as a coordination point for Mg(2+). A G2 region spans residues Gly-60–Ser-64. The interval Asp-81 to Gly-84 is G3. GTP contacts are provided by residues Asp-81 to His-85 and Asn-136 to Asp-139. Positions Asn-136–Asp-139 are G4. The interval Ser-174–Arg-176 is G5.

This sequence belongs to the TRAFAC class translation factor GTPase superfamily. Classic translation factor GTPase family. EF-Tu/EF-1A subfamily. As to quaternary structure, monomer.

The protein localises to the cytoplasm. The enzyme catalyses GTP + H2O = GDP + phosphate + H(+). GTP hydrolase that promotes the GTP-dependent binding of aminoacyl-tRNA to the A-site of ribosomes during protein biosynthesis. The chain is Elongation factor Tu from Xanthomonas euvesicatoria pv. vesicatoria (strain 85-10) (Xanthomonas campestris pv. vesicatoria).